An 84-amino-acid polypeptide reads, in one-letter code: Esculentin-1SIa (84 aa).

Residues 1–22 (MFTLKKPLLLIVLLGIISLSLC) form the signal peptide. A propeptide spans 23 to 36 (EQERAADEDEGSEI) (removed in mature form). C78 and C84 are joined by a disulfide.

In terms of tissue distribution, expressed by the skin glands.

It is found in the secreted. Its function is as follows. Has antimicrobial activity against Gram-negative bacterium E.coli ATCC 8739 (MIC=6.3 ug), against Gram positive bacteria S.aureus ATCC 6538 (MIC=3.1 ug), methicillin-resistant S.aureus ATCC 43300 (MIC=25 ug) and B.subtilis ATCC 6633 (MIC=25 ug). Has no activity against fungus C.albicans ATCC 90028. This Odorrana ishikawae (Ishikawa's frog) protein is Esculentin-1SIa.